The sequence spans 437 residues: Protein farnesyltransferase subunit beta (437 aa).

PFTB repeat units follow at residues 123–164 (ATDV…CIIG), 174–215 (REKL…SLTN), 222–263 (FEGT…VILK), 270–312 (LKSL…PLLH), and 332–374 (QQAL…SIAQ). (2E,6E)-farnesyl diphosphate contacts are provided by residues 248 to 251 (HGGY) and 291 to 294 (RCNK). Zn(2+) contacts are provided by Asp297 and Cys299. Residue 300-303 (YSFW) participates in (2E,6E)-farnesyl diphosphate binding. His362 contributes to the Zn(2+) binding site. Position 432 is a phosphoserine (Ser432). Thr436 bears the Phosphothreonine mark.

This sequence belongs to the protein prenyltransferase subunit beta family. In terms of assembly, heterodimer of FNTA and FNTB. Zn(2+) is required as a cofactor.

The enzyme catalyses L-cysteinyl-[protein] + (2E,6E)-farnesyl diphosphate = S-(2E,6E)-farnesyl-L-cysteinyl-[protein] + diphosphate. In terms of biological role, essential subunit of the farnesyltransferase complex. Catalyzes the transfer of a farnesyl moiety from farnesyl diphosphate to a cysteine at the fourth position from the C-terminus of several proteins having the C-terminal sequence Cys-aliphatic-aliphatic-X. The polypeptide is Protein farnesyltransferase subunit beta (Fntb) (Rattus norvegicus (Rat)).